Consider the following 371-residue polypeptide: MKNVGFIGWRGMVGSVLMDRMSQENDFENLNPVFFTTSQAGQKAPVFGGKDAGDLKSAFDIEELKKLDIIVTCQGGDYTNEVYPKLKATGWDGYWVDAASALRMKDDAIIVLDPVNQHVISEGLKKGIKTFVGGNCTVSLMLMAIGGLFEKDLVEWISVATYQAASGAGAKNMRELLSQMGLLEQAVSSELKDPASSILDIERKVTAKMRADNFPTDNFGAALGGSLIPWIDKLLPETGQTKEEWKGYAETNKILGLSDNPIPVDGLCVRIGALRCHSQAFTIKLKKDLPLEEIEQIIASHNEWVKVIPNDKEITLRELTPAKVTGTLSVPVGRLRKLAMGPEYLAAFTVGDQLLWGAAEPVRRILKQLVA.

NADP(+) contacts are provided by residues 10-13, 37-38, and Q74; these read RGMV and TS. Phosphate is bound at residue R103. Residue C136 is the Acyl-thioester intermediate of the active site. Q163 contributes to the substrate binding site. S166 contributes to the NADP(+) binding site. Substrate is bound at residue E243. K246 lines the phosphate pocket. R270 is a substrate binding site. The active-site Proton acceptor is the H277. Q353 serves as a coordination point for NADP(+).

This sequence belongs to the aspartate-semialdehyde dehydrogenase family. As to quaternary structure, homodimer.

It catalyses the reaction L-aspartate 4-semialdehyde + phosphate + NADP(+) = 4-phospho-L-aspartate + NADPH + H(+). The protein operates within amino-acid biosynthesis; L-lysine biosynthesis via DAP pathway; (S)-tetrahydrodipicolinate from L-aspartate: step 2/4. It functions in the pathway amino-acid biosynthesis; L-methionine biosynthesis via de novo pathway; L-homoserine from L-aspartate: step 2/3. Its pathway is amino-acid biosynthesis; L-threonine biosynthesis; L-threonine from L-aspartate: step 2/5. Catalyzes the NADPH-dependent formation of L-aspartate-semialdehyde (L-ASA) by the reductive dephosphorylation of L-aspartyl-4-phosphate. This is Aspartate-semialdehyde dehydrogenase from Haemophilus influenzae (strain ATCC 51907 / DSM 11121 / KW20 / Rd).